Consider the following 194-residue polypeptide: Putative 3-methyladenine DNA glycosylase (194 aa).

It belongs to the DNA glycosylase MPG family.

This Aeropyrum pernix (strain ATCC 700893 / DSM 11879 / JCM 9820 / NBRC 100138 / K1) protein is Putative 3-methyladenine DNA glycosylase.